The chain runs to 274 residues: MSKAIVKIDEFIKLSKSEEVLPSAFTRMKSVRVSTVDKIMAKENDNISEVDLLKGVKLVKNGYVCLVGLVVSGEWNLPDNCRGGVSICLIDKRMQRHNEATLGSYTTKASKKNFSFKLIPNYSITSQDAERRPWEVMVNIRGVAMSEGWCPLSLEFVSVCIVHKNNVRKGLREKVTAVSEDDAIELTEEVVDEFIEAVPMARRLQNLRKPKYNKEKENKNLNNKNSIGVSKPVGLERNKVRSVVRKGVRSDSSLGVTDMSQDGSSSEISSDSFI.

Residues Lys-209–Ile-274 are disordered. The span at Ser-250–Ile-274 shows a compositional bias: low complexity.

The protein belongs to the tobamovirus movement protein family.

The protein resides in the host cytoplasm. Its subcellular location is the host cytoskeleton. The protein localises to the host cell junction. It is found in the host plasmodesma. In terms of biological role, transports viral genome to neighboring plant cells directly through plasmosdesmata, without any budding. The movement protein allows efficient cell to cell propagation, by bypassing the host cell wall barrier. Forms a ribonucleoprotein complex with viral RNA. Binds microtubules and modulates microtubule stability. Can bind double-stranded DNA. The sequence is that of Movement protein (MP) from Tobamovirus Ob.